The chain runs to 178 residues: Cytidylate kinase (178 aa).

Position 7 to 15 (7 to 15) interacts with ATP; sequence GLPGTGTTT.

The protein belongs to the cytidylate kinase family. Type 2 subfamily.

Its subcellular location is the cytoplasm. It catalyses the reaction CMP + ATP = CDP + ADP. It carries out the reaction dCMP + ATP = dCDP + ADP. The protein is Cytidylate kinase of Methanococcus maripaludis (strain C5 / ATCC BAA-1333).